The following is a 445-amino-acid chain: MKKYFLKCGYFLVCFCLPLIVFANPKTDNERFFIRLSQAPLAQTLEQLAFQQDVNLVIGDILENKISLKLNNIDMPRLLQIIAKSKHLTLNKDDGIYYLNGSQSGKGQVAGNLTTNEPHLVSHTVKLHFAKASELMKSLTTGSGSLLSPAGSITFDDRSNLLVIQDEPRSVQNIKKLIAEMDKPIEQIAIEARIVTITDESLKELGVRWGIFNPTENARRVAGSLTGNSFENIADNLNVNFATTTTPAGSIALQVAKINGRLLDLELSALERENNVEIIASPRLLTTNKKSASIKQGTEIPYIVSNTRNDTQSVEFREAVLGLEVTPHISKDNNILLDLLVSQNSPGSRVAYGQNEVVSIDKQEINTQVFAKDGETIVLGGVFHDTITKSEDKVPLLGDIPVIKRLFSKESERHQKRELVIFVTPHILKAGETLEALKQKSEGKK.

A signal peptide spans 1–23 (MKKYFLKCGYFLVCFCLPLIVFA).

This sequence belongs to the bacterial secretin family. PilQ subfamily.

Its subcellular location is the cell outer membrane. In terms of biological role, involved in transformation (genetic competence for DNA uptake). In Haemophilus influenzae (strain ATCC 51907 / DSM 11121 / KW20 / Rd), this protein is Competence protein E (comE).